Reading from the N-terminus, the 356-residue chain is Biotin synthase (356 aa).

The region spanning 54-278 is the Radical SAM core domain; the sequence is GEVQLCTLLS…VAVARITMPL (225 aa). [4Fe-4S] cluster contacts are provided by C69, C73, and C76. The [2Fe-2S] cluster site is built by C113, C144, C204, and R282.

Belongs to the radical SAM superfamily. Biotin synthase family. In terms of assembly, homodimer. The cofactor is [4Fe-4S] cluster. It depends on [2Fe-2S] cluster as a cofactor.

The enzyme catalyses (4R,5S)-dethiobiotin + (sulfur carrier)-SH + 2 reduced [2Fe-2S]-[ferredoxin] + 2 S-adenosyl-L-methionine = (sulfur carrier)-H + biotin + 2 5'-deoxyadenosine + 2 L-methionine + 2 oxidized [2Fe-2S]-[ferredoxin]. Its pathway is cofactor biosynthesis; biotin biosynthesis; biotin from 7,8-diaminononanoate: step 2/2. Catalyzes the conversion of dethiobiotin (DTB) to biotin by the insertion of a sulfur atom into dethiobiotin via a radical-based mechanism. This chain is Biotin synthase, found in Novosphingobium aromaticivorans (strain ATCC 700278 / DSM 12444 / CCUG 56034 / CIP 105152 / NBRC 16084 / F199).